The chain runs to 90 residues: Co-chaperonin GroES (90 aa).

It belongs to the GroES chaperonin family. Heptamer of 7 subunits arranged in a ring. Interacts with the chaperonin GroEL.

The protein localises to the cytoplasm. Its function is as follows. Together with the chaperonin GroEL, plays an essential role in assisting protein folding. The GroEL-GroES system forms a nano-cage that allows encapsulation of the non-native substrate proteins and provides a physical environment optimized to promote and accelerate protein folding. GroES binds to the apical surface of the GroEL ring, thereby capping the opening of the GroEL channel. The sequence is that of Co-chaperonin GroES from Phocaeicola vulgatus (strain ATCC 8482 / DSM 1447 / JCM 5826 / CCUG 4940 / NBRC 14291 / NCTC 11154) (Bacteroides vulgatus).